The chain runs to 442 residues: Glutamyl-tRNA reductase (442 aa).

Residues 50–53, serine 109, 114–116, and glutamine 120 contribute to the substrate site; these read TCNR and EPQ. Cysteine 51 functions as the Nucleophile in the catalytic mechanism. 189 to 194 is a binding site for NADP(+); that stretch reads GAGEMA.

It belongs to the glutamyl-tRNA reductase family. Homodimer.

The catalysed reaction is (S)-4-amino-5-oxopentanoate + tRNA(Glu) + NADP(+) = L-glutamyl-tRNA(Glu) + NADPH + H(+). It participates in porphyrin-containing compound metabolism; protoporphyrin-IX biosynthesis; 5-aminolevulinate from L-glutamyl-tRNA(Glu): step 1/2. Its function is as follows. Catalyzes the NADPH-dependent reduction of glutamyl-tRNA(Glu) to glutamate 1-semialdehyde (GSA). The polypeptide is Glutamyl-tRNA reductase (Nitratidesulfovibrio vulgaris (strain DSM 19637 / Miyazaki F) (Desulfovibrio vulgaris)).